The primary structure comprises 351 residues: GDSL esterase/lipase At3g53100 (351 aa).

Residues 1 to 24 form the signal peptide; sequence MQKMRVSGFRVLLLVSCFFCKSKG. The active-site Nucleophile is S36. N-linked (GlcNAc...) asparagine glycosylation is found at N234, N254, and N318. Catalysis depends on residues D326 and H329.

It belongs to the 'GDSL' lipolytic enzyme family.

The protein resides in the secreted. The sequence is that of GDSL esterase/lipase At3g53100 from Arabidopsis thaliana (Mouse-ear cress).